The chain runs to 371 residues: MKLNTLQLENYRNYEQVTLDCHPEVNILIGENAQGKTNLLESIYTLALAKSHRTSNDKELIRFKSDYAKIEGELSYRHGTMPLTMFITKKGKQVKVNHLEQSRLTQYIGHLNVVLFAPEDLNIVKGSPQIRRRFIDMELGQISAVYLNDLAQYQRILKQKNNYLKQLQIGQKTDTTMLEVLNQQFAEYALKVTLRREHFIKELETLAQPIHAGITNDRETLTLDYVPSLKLSNYEANQSELIEEVLALLNDNLQREKERGVCLYGPHRDDLSFNVNGMDAQTYGSQGQQRTTALSIKLAEIELMNIEVGEYPILLLDDVLSELDDSRQTHLLSTIQHKVQTFVTTTSVEGIDHEIMNNAKLYRISQGEILK.

30 to 37 (GENAQGKT) contacts ATP.

This sequence belongs to the RecF family.

Its subcellular location is the cytoplasm. Functionally, the RecF protein is involved in DNA metabolism; it is required for DNA replication and normal SOS inducibility. RecF binds preferentially to single-stranded, linear DNA. It also seems to bind ATP. The chain is DNA replication and repair protein RecF from Staphylococcus epidermidis (strain ATCC 35984 / DSM 28319 / BCRC 17069 / CCUG 31568 / BM 3577 / RP62A).